The sequence spans 95 residues: Small ribosomal subunit protein mS37 (95 aa).

In terms of domain architecture, CHCH spans 27-69 (ANKCLVLMSNLLQCWSSYGHMSPKCAGLVTELKSCTSESALGK). 2 consecutive short sequence motifs (cx9C motif) follow at residues 30–40 (CLVLMSNLLQC) and 51–61 (CAGLVTELKSC). 2 cysteine pairs are disulfide-bonded: Cys30–Cys61 and Cys40–Cys51.

The protein belongs to the mitochondrion-specific ribosomal protein mS37 family. As to quaternary structure, component of the mitochondrial small ribosomal subunit (mt-SSU). Mature yeast 74S mitochondrial ribosomes consist of a small (37S) and a large (54S) subunit. The 37S small subunit contains a 15S ribosomal RNA (15S mt-rRNA) and 34 different proteins. The 54S large subunit contains a 21S rRNA (21S mt-rRNA) and 46 different proteins.

Its subcellular location is the mitochondrion. It is found in the mitochondrion matrix. Component of the mitochondrial ribosome (mitoribosome), a dedicated translation machinery responsible for the synthesis of mitochondrial genome-encoded proteins, including at least some of the essential transmembrane subunits of the mitochondrial respiratory chain. The mitoribosomes are attached to the mitochondrial inner membrane and translation products are cotranslationally integrated into the membrane. This is Small ribosomal subunit protein mS37 (MRP10) from Saccharomyces cerevisiae (strain ATCC 204508 / S288c) (Baker's yeast).